A 200-amino-acid polypeptide reads, in one-letter code: MKSLLFCCLFGTFLATGMCLECEICIGLGLECNTWTKTCDANQDTCVTFQTEVIRAPVSLSLISKSCGTSDTCHLNYVETSPHNELTVKTKRTCCTGEECKTLPPPVLGHKVNPPNGLQCPGCLGLSSKECTEHLVSCRGSENQCLSIIGKEFGLFFRALSYKGCATESLCTLFEKRFWNVLEDVEVDFKCTPALPKSSQ.

A signal peptide spans 1–19; sequence MKSLLFCCLFGTFLATGMC. Cystine bridges form between Cys-22/Cys-46, Cys-25/Cys-32, Cys-39/Cys-67, Cys-73/Cys-94, Cys-95/Cys-100, Cys-120/Cys-145, Cys-138/Cys-165, and Cys-171/Cys-191.

It belongs to the CNF-like-inhibitor family. Heterotrimer of 2 subunits A and 1 subunit B; non-covalently linked. In terms of tissue distribution, expressed by the liver.

It is found in the secreted. Functionally, inhibits the enzymatic activity of all phospholipase A2 tested, binding with micromole to nanomole affinity. The protein is Phospholipase A2 inhibitor NAI of Notechis ater (Black tiger snake).